The primary structure comprises 65 residues: Beta-toxin Am IT (65 aa).

A Pyrrolidone carboxylic acid (Glu); partial modification is found at E1. The LCN-type CS-alpha/beta domain occupies 1 to 64; it reads EHGYLLDKYT…LWNYKTNKCK (64 aa). 4 disulfide bridges follow: C12-C63, C16-C38, C23-C45, and C27-C47. S65 carries the post-translational modification Serine amide.

It belongs to the long (4 C-C) scorpion toxin superfamily. Sodium channel inhibitor family. Expressed by the venom gland.

It localises to the secreted. Its function is as follows. Has a toxic effect on insects and mammals. On German cockroach larvae, it provokes contraction, paralysis and lethality. Intracerebroventricular injection into mice causes severe neurotoxic symptoms. It fully competes with the binding of the iodinated Css4 (AC P60266) on rat brain synaptosomes, with moderate affinity and in a concentration-dependent manner (EC(50)=25 nM). It may act on both site 3 and site 4 of voltage-gated sodium channels. The protein is Beta-toxin Am IT of Androctonus mauritanicus mauritanicus (Scorpion).